The following is a 209-amino-acid chain: NAD(P)H-quinone oxidoreductase subunit K 2 (209 aa).

Residues cysteine 53, cysteine 54, cysteine 118, and cysteine 149 each coordinate [4Fe-4S] cluster.

This sequence belongs to the complex I 20 kDa subunit family. In terms of assembly, NDH-1 can be composed of about 15 different subunits; different subcomplexes with different compositions have been identified which probably have different functions. It depends on [4Fe-4S] cluster as a cofactor.

The protein localises to the cellular thylakoid membrane. It catalyses the reaction a plastoquinone + NADH + (n+1) H(+)(in) = a plastoquinol + NAD(+) + n H(+)(out). The enzyme catalyses a plastoquinone + NADPH + (n+1) H(+)(in) = a plastoquinol + NADP(+) + n H(+)(out). NDH-1 shuttles electrons from an unknown electron donor, via FMN and iron-sulfur (Fe-S) centers, to quinones in the respiratory and/or the photosynthetic chain. The immediate electron acceptor for the enzyme in this species is believed to be plastoquinone. Couples the redox reaction to proton translocation, and thus conserves the redox energy in a proton gradient. Cyanobacterial NDH-1 also plays a role in inorganic carbon-concentration. The protein is NAD(P)H-quinone oxidoreductase subunit K 2 of Acaryochloris marina (strain MBIC 11017).